The chain runs to 98 residues: Large ribosomal subunit protein uL23 (98 aa).

Belongs to the universal ribosomal protein uL23 family. As to quaternary structure, part of the 50S ribosomal subunit. Contacts protein L29, and trigger factor when it is bound to the ribosome.

Functionally, one of the early assembly proteins it binds 23S rRNA. One of the proteins that surrounds the polypeptide exit tunnel on the outside of the ribosome. Forms the main docking site for trigger factor binding to the ribosome. This is Large ribosomal subunit protein uL23 from Koribacter versatilis (strain Ellin345).